The chain runs to 215 residues: Pyrrolidone-carboxylate peptidase (215 aa).

Catalysis depends on residues E80, C143, and H167.

The protein belongs to the peptidase C15 family. In terms of assembly, homotetramer.

The protein resides in the cytoplasm. It carries out the reaction Release of an N-terminal pyroglutamyl group from a polypeptide, the second amino acid generally not being Pro.. Removes 5-oxoproline from various penultimate amino acid residues except L-proline. This Yersinia pseudotuberculosis serotype O:3 (strain YPIII) protein is Pyrrolidone-carboxylate peptidase.